A 323-amino-acid polypeptide reads, in one-letter code: tRNA(Ile)-lysidine synthase (323 aa).

ATP is bound at residue 33–38; sequence SGGSDS.

It belongs to the tRNA(Ile)-lysidine synthase family.

The protein localises to the cytoplasm. It catalyses the reaction cytidine(34) in tRNA(Ile2) + L-lysine + ATP = lysidine(34) in tRNA(Ile2) + AMP + diphosphate + H(+). Ligates lysine onto the cytidine present at position 34 of the AUA codon-specific tRNA(Ile) that contains the anticodon CAU, in an ATP-dependent manner. Cytidine is converted to lysidine, thus changing the amino acid specificity of the tRNA from methionine to isoleucine. This Mycobacterium leprae (strain TN) protein is tRNA(Ile)-lysidine synthase.